The sequence spans 1321 residues: Bile salt export pump (1321 aa).

At 1–62 (MSDSVILRSI…FSSSTDIWLM (62 aa)) the chain is on the cytoplasmic side. The disordered stretch occupies residues 16-37 (ENDGFESDKSYNNDKKSRLQDE). Residues 21–37 (ESDKSYNNDKKSRLQDE) show a composition bias toward basic and acidic residues. Positions 62 to 385 (MFVGSLCAFL…ASPCLEAFAT (324 aa)) constitute an ABC transmembrane type-1 1 domain. The helical transmembrane segment at 63-83 (FVGSLCAFLHGIAQPGVLLIF) threads the bilayer. The Extracellular portion of the chain corresponds to 84-147 (GTMTDVFIDY…MIKFASYYAG (64 aa)). 4 N-linked (GlcNAc...) asparagine glycosylation sites follow: Asn109, Asn116, Asn122, and Asn125. The chain crosses the membrane as a helical span at residues 148–168 (IAVAVLITGYIQICFWVIAAA). Topologically, residues 169–215 (RQIQKMRKFYFRRIMRMEIGWFDCNSVGELNTRFSDDINKINDAIAD) are cytoplasmic. A helical membrane pass occupies residues 216–236 (QMALFIQRMTSTICGFLLGFF). Residues 237–240 (RGWK) are Extracellular-facing. Residues 241-261 (LTLVIISVSPLIGIGAATIGL) traverse the membrane as a helical segment. Residues 262-319 (SVSKFTDYELKAYAKAGVVADEVISSMRTVAAFGGEKREVERYEKNLVFAQRWGIRKG) are Cytoplasmic-facing. A helical transmembrane segment spans residues 320 to 340 (IVMGFFTGFVWCLIFLCYALA). Residues 341-353 (FWYGSTLVLDEGE) lie on the Extracellular side of the membrane. Residues 354–374 (YTPGTLVQIFLSVIVGALNLG) traverse the membrane as a helical segment. Residues 375–755 (NASPCLEAFA…KFSAPEWPYM (381 aa)) are Cytoplasmic-facing. An ABC transporter 1 domain is found at 420–656 (IEFHNVTFHY…KGVYFTLVTL (237 aa)). Position 455 to 462 (455 to 462 (GPSGAGKS)) interacts with ATP. Thr586 is subject to Phosphothreonine. Ser587 carries the post-translational modification Phosphoserine. The interaction with HAX1 stretch occupies residues 651–672 (FTLVTLQSQGNQALNEEDIKDA). 3 positions are modified to phosphoserine: Ser690, Ser701, and Ser704. One can recognise an ABC transmembrane type-1 2 domain in the interval 755 to 1043 (MLVGSVGAAV…AFSYTPSYAK (289 aa)). The helical transmembrane segment at 756-776 (LVGSVGAAVNGTVTPLYAFLF) threads the bilayer. At 777-794 (SQILGTFSIPDKEEQRSQ) the chain is on the extracellular side. A helical membrane pass occupies residues 795 to 815 (INGVCLLFVAMGCVSLFTQFL). Residues 816–869 (QGYAFAKSGELLTKRLRKFGFRAMLGQDIAWFDDLRNSPGALTTRLATDASQVQ) are Cytoplasmic-facing. 2 consecutive transmembrane segments (helical) span residues 870–890 (GAAG…TVAM) and 891–911 (IIAF…FPFL). Over 912–979 (ALSGATQTRM…PFKTAIQKAN (68 aa)) the chain is Cytoplasmic. The helical transmembrane segment at 980–1000 (IYGFCFAFAQCIMFIANSASY) threads the bilayer. Residues 1001-1011 (RYGGYLISNEG) lie on the Extracellular side of the membrane. The chain crosses the membrane as a helical span at residues 1012 to 1032 (LHFSYVFRVISAVVLSATALG). Residues 1033–1321 (RAFSYTPSYA…KLVTTGSPIS (289 aa)) are Cytoplasmic-facing. Residues 1078–1316 (IDFVDCKFTY…KGAYYKLVTT (239 aa)) enclose the ABC transporter 2 domain. 1113–1120 (GSSGCGKS) lines the ATP pocket. Ser1214 carries the post-translational modification Phosphoserine. The mediates internalization from the plasma membrane stretch occupies residues 1311–1314 (YKLV). Ser1321 bears the Phosphoserine mark.

This sequence belongs to the ABC transporter superfamily. ABCB family. Multidrug resistance exporter (TC 3.A.1.201) subfamily. Interacts with HAX1. Interacts with the adapter protein complex 2 (AP-2) throught AP2A2 or AP2A1; this interaction regulates cell membrane expression of ABCB11 through its internalization in a clathrin-dependent manner and its subsequent degradation. In terms of processing, N-glycosylated. Ubiquitinated; short-chain ubiquitination regulates cell-Surface expression of ABCB11. In terms of tissue distribution, expressed predominantly, if not exclusively in the liver, where it was further localized to the canalicular microvilli and to subcanalicular vesicles of the hepatocytes by in situ.

The protein localises to the apical cell membrane. It localises to the recycling endosome membrane. Its subcellular location is the endosome. It is found in the cell membrane. It catalyses the reaction cholate(in) + ATP + H2O = cholate(out) + ADP + phosphate + H(+). The catalysed reaction is taurocholate(in) + ATP + H2O = taurocholate(out) + ADP + phosphate + H(+). It carries out the reaction glycocholate(in) + ATP + H2O = glycocholate(out) + ADP + phosphate + H(+). The enzyme catalyses glycochenodeoxycholate(in) + ATP + H2O = glycochenodeoxycholate(out) + ADP + phosphate + H(+). It catalyses the reaction taurochenodeoxycholate(in) + ATP + H2O = taurochenodeoxycholate(out) + ADP + phosphate + H(+). The catalysed reaction is glycoursodeoxycholate(in) + ATP + H2O = glycoursodeoxycholate(out) + ADP + phosphate + H(+). It carries out the reaction tauroursodeoxycholate(in) + ATP + H2O = tauroursodeoxycholate(out) + ADP + phosphate + H(+). The enzyme catalyses taurodeoxycholate(in) + ATP + H2O = taurodeoxycholate(out) + ADP + phosphate + H(+). It catalyses the reaction taurolithocholate 3-sulfate(in) + ATP + H2O = taurolithocholate 3-sulfate(out) + ADP + phosphate + H(+). The catalysed reaction is pravastatin(in) + ATP + H2O = pravastatin(out) + ADP + phosphate + H(+). With respect to regulation, the uptake of taurocholate is inhibited by taurolithocholate sulfate with an IC(50) of 9 uM. Pravastatin competitively inhibits the transport of taurocholic acid. Cyclosporin A, glibenclamide, rifampicin and troglitazonestrongly competitively inhibit the transport activity of taurocholate. The canalicular transport activity of taurocholate is strongly dependent on canalicular membrane cholesterol content. The uptake of taurocholate is increased by short- and medium-chain fatty acids. Cholesterol increases transport capacity of taurocholate without affecting the affinity for the substrate. Functionally, catalyzes the transport of the major hydrophobic bile salts, such as taurine and glycine-conjugated cholic acid across the canalicular membrane of hepatocytes in an ATP-dependent manner, therefore participates in hepatic bile acid homeostasis and consequently to lipid homeostasis through regulation of biliary lipid secretion in a bile salts dependent manner. Transports taurine-conjugated bile salts more rapidly than glycine-conjugated bile salts. Also transports non-bile acid compounds, such as pravastatin and fexofenadine in an ATP-dependent manner and may be involved in their biliary excretion. In Homo sapiens (Human), this protein is Bile salt export pump.